Reading from the N-terminus, the 229-residue chain is GTP cyclohydrolase 1 (229 aa).

The interval 1–26 (MDAKIKPLRGGKPADARPEFQPAELD) is disordered. The Zn(2+) site is built by cysteine 118, histidine 121, and cysteine 189.

The protein belongs to the GTP cyclohydrolase I family. Toroid-shaped homodecamer, composed of two pentamers of five dimers.

It carries out the reaction GTP + H2O = 7,8-dihydroneopterin 3'-triphosphate + formate + H(+). It functions in the pathway cofactor biosynthesis; 7,8-dihydroneopterin triphosphate biosynthesis; 7,8-dihydroneopterin triphosphate from GTP: step 1/1. In Rhodopseudomonas palustris (strain BisB5), this protein is GTP cyclohydrolase 1.